A 317-amino-acid polypeptide reads, in one-letter code: Probable RuBisCO transcriptional regulator (317 aa).

The HTH lysR-type domain maps to 6–63; the sequence is FTLDQLRILKAIAKEGSFKKAANSLYVSQPAISLQIQNLERQLNVALFERGNKKATLT. The segment at residues 23 to 42 is a DNA-binding region (H-T-H motif); it reads FKKAANSLYVSQPAISLQIQ.

This sequence belongs to the LysR transcriptional regulatory family.

Its subcellular location is the plastid. The protein localises to the chloroplast. In terms of biological role, trans-acting transcriptional regulator of RuBisCO genes (rbcL and rbcS) expression. The sequence is that of Probable RuBisCO transcriptional regulator (rbcR) from Porphyra purpurea (Red seaweed).